The chain runs to 260 residues: tRNA pseudouridine synthase C (260 aa).

The active site involves Asp54.

It belongs to the pseudouridine synthase RluA family.

It catalyses the reaction uridine(65) in tRNA = pseudouridine(65) in tRNA. Its function is as follows. Responsible for synthesis of pseudouridine from uracil-65 in transfer RNAs. This chain is tRNA pseudouridine synthase C (truC), found in Escherichia coli O157:H7.